We begin with the raw amino-acid sequence, 881 residues long: Envelope glycoprotein gp160 (881 aa).

The N-terminal stretch at 1–22 is a signal peptide; sequence MGCLKNQLLIAILLLSVYGIYC. Residues 23–696 lie on the Extracellular side of the membrane; it reads TQYVTVFYGV…ASWIKYIQYG (674 aa). Asparagine 37 carries an N-linked (GlcNAc...) asparagine; by host glycan. Residues cysteine 44 and cysteine 57 are joined by a disulfide bond. N-linked (GlcNAc...) asparagine; by host glycosylation is found at asparagine 70, asparagine 114, asparagine 148, asparagine 158, asparagine 173, asparagine 186, asparagine 200, asparagine 204, asparagine 214, asparagine 246, asparagine 249, asparagine 280, asparagine 286, asparagine 297, asparagine 308, asparagine 318, asparagine 373, and asparagine 379. Cystine bridges form between cysteine 101/cysteine 222, cysteine 108/cysteine 213, cysteine 113/cysteine 170, cysteine 235/cysteine 265, and cysteine 245/cysteine 257. The tract at residues 113 to 169 is V1; that stretch reads CNKSETDRWGLTKSSTTITTAAPTSAPVSEKLDMVNETSSCIAQNNCTGLEQEQMIS. The V2 stretch occupies residues 170-213; sequence CKFNMTGLKRDKTKEYNETWYSTDLVCEQRNSTDNESRCYMNHC. A V3 region spans residues 313–345; it reads CRRPGNKTVLPVTIMSELVFHSQPINDRPKQAW. An intrachain disulfide couples cysteine 313 to cysteine 346. Disulfide bonds link cysteine 397–cysteine 461 and cysteine 404–cysteine 434. Positions 404–434 are V4; it reads CKMNWFLNWVEDKDVTTQRPKERHRKNYVPC. 2 N-linked (GlcNAc...) asparagine; by host glycosylation sites follow: asparagine 462 and asparagine 478. The V5 stretch occupies residues 477–484; it reads GNQTSITM. Positions 528–548 are fusion peptide; that stretch reads GVFVLGFLGFLATAGSAIGAV. The tract at residues 591–607 is immunosuppression; that stretch reads LQTKVTAIEKYLKDQAQ. N-linked (GlcNAc...) asparagine; by host glycosylation is found at asparagine 627, asparagine 636, and asparagine 652. Residues 636 to 668 are a coiled coil; the sequence is NDTWQEWERKVDFLEENITALLEEAQIQQEKNM. The segment at 673–694 is MPER; binding to GalCer; it reads KLNSWDVFGNWFDLASWIKYIQ. Residues 697-717 traverse the membrane as a helical segment; it reads IYVVVGVILLRIVIYIVQMLA. Residues 718–881 lie on the Cytoplasmic side of the membrane; that stretch reads KLRQGYRPVF…IRQGLELTLL (164 aa). Residues 723 to 726 carry the YXXV motif; contains endocytosis signal motif; that stretch reads YRPV. Residues 737-761 are disordered; that stretch reads THTQQDPALPTREGKEGDGGEGGGN. Residue cysteine 789 is the site of S-palmitoyl cysteine; by host attachment. Residues 880–881 carry the Di-leucine internalization motif motif; that stretch reads LL.

The mature envelope protein (Env) consists of a homotrimer of non-covalently associated gp120-gp41 heterodimers. The resulting complex protrudes from the virus surface as a spike. Interacts with host CD4 and CCR5. Gp120 also interacts with the C-type lectins CD209/DC-SIGN and CLEC4M/DC-SIGNR (collectively referred to as DC-SIGN(R)). As to quaternary structure, the mature envelope protein (Env) consists of a homotrimer of non-covalently associated gp120-gp41 heterodimers. The resulting complex protrudes from the virus surface as a spike. Post-translationally, specific enzymatic cleavages in vivo yield mature proteins. Envelope glycoproteins are synthesized as an inactive precursor that is heavily N-glycosylated and processed likely by host cell furin in the Golgi to yield the mature SU and TM proteins. The cleavage site between SU and TM requires the minimal sequence [KR]-X-[KR]-R. In terms of processing, palmitoylation of the transmembrane protein and of Env polyprotein (prior to its proteolytic cleavage) is essential for their association with host cell membrane lipid rafts. Palmitoylation is therefore required for envelope trafficking to classical lipid rafts, but not for viral replication.

It localises to the virion membrane. Its subcellular location is the host cell membrane. The protein localises to the host endosome membrane. Its function is as follows. The surface protein gp120 (SU) attaches the virus to the host lymphoid cell by binding to the primary receptor CD4. This interaction induces a structural rearrangement creating a high affinity binding site for a chemokine coreceptor like CCR5. This peculiar 2 stage receptor-interaction strategy allows gp120 to maintain the highly conserved coreceptor-binding site in a cryptic conformation, protected from neutralizing antibodies. These changes are transmitted to the transmembrane protein gp41 and are thought to activate its fusogenic potential by unmasking its fusion peptide. Surface protein gp120 (SU) may target the virus to gut-associated lymphoid tissue (GALT) by binding host ITGA4/ITGB7 (alpha-4/beta-7 integrins), a complex that mediates T-cell migration to the GALT. Interaction between gp120 and ITGA4/ITGB7 would allow the virus to enter GALT early in the infection, infecting and killing most of GALT's resting CD4+ T-cells. This T-cell depletion is believed to be the major insult to the host immune system leading to AIDS. Functionally, the surface protein gp120 is a ligand for CD209/DC-SIGN and CLEC4M/DC-SIGNR, which are respectively found on dendritic cells (DCs), and on endothelial cells of liver sinusoids and lymph node sinuses. These interactions allow capture of viral particles at mucosal surfaces by these cells and subsequent transmission to permissive cells. DCs are professional antigen presenting cells, critical for host immunity by inducing specific immune responses against a broad variety of pathogens. They act as sentinels in various tissues where they take up antigen, process it, and present it to T-cells following migration to lymphoid organs. SIV subverts the migration properties of dendritic cells to gain access to CD4+ T-cells in lymph nodes. Virus transmission to permissive T-cells occurs either in trans (without DCs infection, through viral capture and transmission), or in cis (following DCs productive infection, through the usual CD4-gp120 interaction), thereby inducing a robust infection. In trans infection, bound virions remain infectious over days and it is proposed that they are not degraded, but protected in non-lysosomal acidic organelles within the DCs close to the cell membrane thus contributing to the viral infectious potential during DCs' migration from the periphery to the lymphoid tissues. On arrival at lymphoid tissues, intact virions recycle back to DCs' cell surface allowing virus transmission to CD4+ T-cells. Virion capture also seems to lead to MHC-II-restricted viral antigen presentation, and probably to the activation of SIV-specific CD4+ cells. In terms of biological role, the transmembrane protein gp41 (TM) acts as a class I viral fusion protein. Under the current model, the protein has at least 3 conformational states: pre-fusion native state, pre-hairpin intermediate state, and post-fusion hairpin state. During fusion of viral and target intracellular membranes, the coiled coil regions (heptad repeats) assume a trimer-of-hairpins structure, positioning the fusion peptide in close proximity to the C-terminal region of the ectodomain. The formation of this structure appears to drive apposition and subsequent fusion of viral and target cell membranes. Complete fusion occurs in host cell endosomes. The virus undergoes clathrin-dependent internalization long before endosomal fusion, thus minimizing the surface exposure of conserved viral epitopes during fusion and reducing the efficacy of inhibitors targeting these epitopes. Membranes fusion leads to delivery of the nucleocapsid into the cytoplasm. Its function is as follows. The envelope glycoprotein gp160 precursor down-modulates cell surface CD4 antigen by interacting with it in the endoplasmic reticulum and blocking its transport to the cell surface. The gp120-gp41 heterodimer allows rapid transcytosis of the virus through CD4 negative cells such as simple epithelial monolayers of the intestinal, rectal and endocervical epithelial barriers. Both gp120 and gp41 specifically recognize glycosphingolipids galactosyl-ceramide (GalCer) or 3' sulfo-galactosyl-ceramide (GalS) present in the lipid rafts structures of epithelial cells. Binding to these alternative receptors allows the rapid transcytosis of the virus through the epithelial cells. This transcytotic vesicle-mediated transport of virions from the apical side to the basolateral side of the epithelial cells does not involve infection of the cells themselves. The chain is Envelope glycoprotein gp160 (env) from Simian immunodeficiency virus (isolate K78) (SIV-mac).